We begin with the raw amino-acid sequence, 513 residues long: Ankyrin repeat domain-containing protein 13C-B (513 aa).

Residues 1–19 (MTGEKIRSLHRDQKPSKDE) are compositionally biased toward basic and acidic residues. Disordered stretches follow at residues 1-34 (MTGE…DGTF) and 55-77 (PSNP…PMTP). Residues 20 to 29 (DLLEPDEEAT) show a composition bias toward acidic residues. 3 ANK repeats span residues 83–114 (DVYF…QKDN), 115–144 (HGNT…PVKV), and 148–177 (QGWS…QQSR).

It is found in the endoplasmic reticulum membrane. In terms of biological role, acts as a molecular chaperone for G protein-coupled receptors, regulating their biogenesis and exit from the ER. This chain is Ankyrin repeat domain-containing protein 13C-B (ankrd13c-b), found in Xenopus laevis (African clawed frog).